A 189-amino-acid polypeptide reads, in one-letter code: Protein GrpE (189 aa).

The span at 1–14 shows a compositional bias: basic and acidic residues; sequence MTEKNEEVVEDKNI. The tract at residues 1–38 is disordered; it reads MTEKNEEVVEDKNISDQTDENLTEEIESEADDLQVEPD. A compositionally biased stretch (acidic residues) spans 17–35; sequence QTDENLTEEIESEADDLQV.

It belongs to the GrpE family. In terms of assembly, homodimer.

Its subcellular location is the cytoplasm. Functionally, participates actively in the response to hyperosmotic and heat shock by preventing the aggregation of stress-denatured proteins, in association with DnaK and GrpE. It is the nucleotide exchange factor for DnaK and may function as a thermosensor. Unfolded proteins bind initially to DnaJ; upon interaction with the DnaJ-bound protein, DnaK hydrolyzes its bound ATP, resulting in the formation of a stable complex. GrpE releases ADP from DnaK; ATP binding to DnaK triggers the release of the substrate protein, thus completing the reaction cycle. Several rounds of ATP-dependent interactions between DnaJ, DnaK and GrpE are required for fully efficient folding. This is Protein GrpE from Leuconostoc mesenteroides subsp. mesenteroides (strain ATCC 8293 / DSM 20343 / BCRC 11652 / CCM 1803 / JCM 6124 / NCDO 523 / NBRC 100496 / NCIMB 8023 / NCTC 12954 / NRRL B-1118 / 37Y).